Here is a 533-residue protein sequence, read N- to C-terminus: MAVSSSTSTCSSFSLLLLLLLLAAAPWRSGEAAAAAARALNFTRQDFPGEFVFGAGTSAYQYEGATDEDGRSPSIWDTFTHAGKMPDKSTGDMGAGGYHKYKEDVKLMSDTSLEAYRFSISWSRLIPRGRGPVNPKGLEYYNSLIDELVERGIEIHVTLYHLDFPQILEDEYHGWLSPRVIDDFTAYADVCFREFGDRVRHWTTMDEPNVLSIAAYDSGAFPPCRCSPPFGANCTAGNSTVEPYVVAHNSILAHASVTRLYRDKYQATQEGFVGMNIYSFWNYPFSSSSADIAATQRALDFMVGWILDPLVYGDYPEIMKKKAGSRIPSFTEEQSELIRGSADFIGINHYTSVYISDASNGETVGPRDYSADMAATFRISRNDTPSGQFVPTRLPRDPKGLQCMLEYLRDTYQGIPVYIQENGFGHFGKDDDSLNDTDRVDYLSSYMGSTLAALRNGANVKGYFVWSFLDVFELLAGYHSPFGLHYVDFEDPNLPRQPKLSAHWYSKFLRGEIGINIESTISPDEHEHEHADQ.

Positions 1–24 are cleaved as a signal peptide; the sequence is MAVSSSTSTCSSFSLLLLLLLLAA. N-linked (GlcNAc...) asparagine glycosylation is present at Asn-41. A beta-D-glucoside is bound by residues Gln-61, His-161, and 206 to 207; that span reads DE. Catalysis depends on Glu-207, which acts as the Proton donor. A disulfide bridge connects residues Cys-226 and Cys-234. Asn-233 and Asn-238 each carry an N-linked (GlcNAc...) asparagine glycan. Tyr-350 and Glu-421 together coordinate a beta-D-glucoside. The active-site Nucleophile is Glu-421. A glycan (N-linked (GlcNAc...) asparagine) is linked at Asn-435. 2 residues coordinate a beta-D-glucoside: Trp-466 and Phe-482.

Belongs to the glycosyl hydrolase 1 family.

It catalyses the reaction Hydrolysis of terminal, non-reducing beta-D-glucosyl residues with release of beta-D-glucose.. This is Beta-glucosidase 22 (BGLU22) from Oryza sativa subsp. japonica (Rice).